A 153-amino-acid polypeptide reads, in one-letter code: Superoxide dismutase [Cu-Zn] (153 aa).

Cu cation is bound by residues histidine 45, histidine 47, and histidine 62. Residues cysteine 56 and cysteine 145 are joined by a disulfide bond. Zn(2+) is bound by residues histidine 62, histidine 70, histidine 79, and aspartate 82. Histidine 119 lines the Cu cation pocket.

It belongs to the Cu-Zn superoxide dismutase family. In terms of assembly, homodimer. Cu cation serves as cofactor. It depends on Zn(2+) as a cofactor.

The protein localises to the cytoplasm. It carries out the reaction 2 superoxide + 2 H(+) = H2O2 + O2. Destroys radicals which are normally produced within the cells and which are toxic to biological systems. The protein is Superoxide dismutase [Cu-Zn] of Drosophila yakuba (Fruit fly).